A 298-amino-acid polypeptide reads, in one-letter code: Small ribosomal subunit protein uS2 (298 aa).

The segment at Glu-272–Trp-298 is disordered.

Belongs to the universal ribosomal protein uS2 family. Component of the small ribosomal subunit. Mature ribosomes consist of a small (40S) and a large (60S) subunit. The 40S subunit contains about 33 different proteins and 1 molecule of RNA (18S). The 60S subunit contains about 49 different proteins and 3 molecules of RNA (25S, 5.8S and 5S). Interacts with rps21.

It is found in the cytoplasm. Required for the assembly and/or stability of the 40S ribosomal subunit. Required for the processing of the 20S rRNA-precursor to mature 18S rRNA in a late step of the maturation of 40S ribosomal subunits. The sequence is that of Small ribosomal subunit protein uS2 (rps0) from Aspergillus niger (strain ATCC MYA-4892 / CBS 513.88 / FGSC A1513).